Reading from the N-terminus, the 157-residue chain is MSRKSKKIKKKVFKDSKYDSQVIAKFVNRMMYDGKKSISEAIVYNSIDLLAEKTEEVDKVAAFSKALDNVKPLVEVRSRRVGGATYQVPVEVREERREALAMKWIIAAARKASGKSMQEKLGNELVNSYNSTGVAFKKREDTHRMAEANRAFTHYRW.

This sequence belongs to the universal ribosomal protein uS7 family. In terms of assembly, part of the 30S ribosomal subunit. Contacts proteins S9 and S11.

One of the primary rRNA binding proteins, it binds directly to 16S rRNA where it nucleates assembly of the head domain of the 30S subunit. Is located at the subunit interface close to the decoding center, probably blocks exit of the E-site tRNA. In Borrelia turicatae (strain 91E135), this protein is Small ribosomal subunit protein uS7.